We begin with the raw amino-acid sequence, 501 residues long: Cytochrome P450 7A1 (501 aa).

Residues 4–24 traverse the membrane as a helical segment; it reads IFWIWGICLSVCCCLWLILGL. Cysteine 441 contributes to the heme binding site.

This sequence belongs to the cytochrome P450 family. The cofactor is heme. In terms of tissue distribution, detected in liver.

The protein localises to the endoplasmic reticulum membrane. Its subcellular location is the microsome membrane. It carries out the reaction cholesterol + reduced [NADPH--hemoprotein reductase] + O2 = 7alpha-hydroxycholesterol + oxidized [NADPH--hemoprotein reductase] + H2O + H(+). The enzyme catalyses 4beta-hydroxycholesterol + reduced [NADPH--hemoprotein reductase] + O2 = 4beta,7alpha-dihydroxycholesterol + oxidized [NADPH--hemoprotein reductase] + H2O + H(+). It catalyses the reaction lathosterol + reduced [NADPH--hemoprotein reductase] + O2 = 7alpha,8alpha-epoxy-5alpha-cholestan-3beta-ol + oxidized [NADPH--hemoprotein reductase] + H2O + H(+). The catalysed reaction is lathosterol + reduced [NADPH--hemoprotein reductase] + O2 = 5alpha-cholestan-7-oxo-3beta-ol + oxidized [NADPH--hemoprotein reductase] + H2O + H(+). It carries out the reaction 7-dehydrocholesterol + reduced [NADPH--hemoprotein reductase] + O2 = 7-oxocholesterol + oxidized [NADPH--hemoprotein reductase] + H2O + H(+). The enzyme catalyses (24S)-hydroxycholesterol + reduced [NADPH--hemoprotein reductase] + O2 = (24S)-7alpha-dihydroxycholesterol + oxidized [NADPH--hemoprotein reductase] + H2O + H(+). It catalyses the reaction (24R)-hydroxycholesterol + reduced [NADPH--hemoprotein reductase] + O2 = (24R)-7alpha-dihydroxycholesterol + oxidized [NADPH--hemoprotein reductase] + H2O + H(+). Its pathway is lipid metabolism; bile acid biosynthesis. It participates in steroid metabolism; cholesterol degradation. A cytochrome P450 monooxygenase involved in the metabolism of endogenous cholesterol and its oxygenated derivatives (oxysterols). Mechanistically, uses molecular oxygen inserting one oxygen atom into a substrate, and reducing the second into a water molecule, with two electrons provided by NADPH via cytochrome P450 reductase (CPR; NADPH-ferrihemoprotein reductase). Functions as a critical regulatory enzyme of bile acid biosynthesis and cholesterol homeostasis. Catalyzes the hydroxylation of carbon hydrogen bond at 7-alpha position of cholesterol, a rate-limiting step in cholesterol catabolism and bile acid biosynthesis. 7-alpha hydroxylates several oxysterols, including 4beta-hydroxycholesterol and 24-hydroxycholesterol. Catalyzes the oxidation of the 7,8 double bond of 7-dehydrocholesterol and lathosterol with direct and predominant formation of the 7-keto derivatives. This is Cytochrome P450 7A1 (CYP7A1) from Oryctolagus cuniculus (Rabbit).